A 377-amino-acid chain; its full sequence is MYTFVVRQENSSVYAEVSRLLLATGYWKRLRRDNPRFNLMLGGRNRLPFGRLGHEPGLAQLVNYYRGADKLCRKASLVKLVKTSPELSESCSWFPESYVIHPTNLKTPVAPAQNGIQLPVSNSRTDEREFFLASYNRKKEDGEGNVWIAKSSAGAKGEGILISSEASELLDFIDNQGQVHVIQKYLEHPLLLEPGHRKFDIRSWVLVDHQYNIYLYREGVLRTASEPYHVDNFQDKTCHLTNHCIQKEYSKNYGKYEEGNEMFFEEFNQYLTSALNITLENSILLQIKHIIRSCLMSVEPAISTKHLPYQSFQLLGFDFMVDEELKVWLIEVNGAPACAQKLYAELCQGIVDIAISSVFPPPDTEQVPQQPAAFMKL.

The 368-residue stretch at 3–370 (TFVVRQENSS…PPDTEQVPQQ (368 aa)) folds into the TTL domain.

Belongs to the tubulin--tyrosine ligase family. As to quaternary structure, monomer. Mg(2+) is required as a cofactor. K(+) serves as cofactor.

The enzyme catalyses C-terminal L-alpha-aminoacyl-L-glutamyl-L-glutamyl-[tubulin] + L-tyrosine + ATP = C-terminal L-alpha-aminoacyl-L-glutamyl-L-glutamyl-L-tyrosyl-[tubulin] + ADP + phosphate + H(+). Catalyzes the post-translational addition of a tyrosine to the C-terminal end of detyrosinated alpha-tubulin. The chain is Tubulin--tyrosine ligase (Ttl) from Rattus norvegicus (Rat).